An 8545-amino-acid chain; its full sequence is Nuclear anchorage protein 1 (8545 aa).

The segment at 1-325 is actin-binding; sequence MSSSPPARPC…VITYVSQFVR (325 aa). At 1 to 8494 the chain is on the cytoplasmic side; it reads MSSSPPARPC…QRSRWRRVLR (8494 aa). Positions 23 to 130 constitute a Calponin-homology (CH) 1 domain; that stretch reads KAQKNTFTRW…LIWQIILHFQ (108 aa). A disordered region spans residues 148-197; the sequence is TEEPTSSAQPEVVVTAPSPTPSSKKSHSKVSSLSGSKTSLASGEKAPSSP. The segment covering 159–190 has biased composition (low complexity); the sequence is VVVTAPSPTPSSKKSHSKVSSLSGSKTSLASG. The 107-residue stretch at 222–328 folds into the Calponin-homology (CH) 2 domain; the sequence is QSVEQVFLRW…YVSQFVRMFG (107 aa). 19 coiled-coil regions span residues 754–774, 1072–1101, 1215–1236, 1324–1384, 1574–1629, 1725–1754, 1950–1981, 2103–2580, 2682–2712, 2852–2949, 3002–3119, 3178–3295, 3346–3417, 3482–3552, 3587–3703, 3781–3839, 3902–4022, 4114–4198, and 4249–4320; these read NIRD…NHSR, SFFQ…LMVH, ADIL…EIQA, DTKK…QFED, RSIE…DLVK, ENRN…YEDA, PAII…NYNQ, DNIE…KKSD, SVKE…KIAK, IMQE…NIGK, DQIV…KTVV, DDEK…DEFK, QLQH…PEND, DELI…EKSL, KAEE…ELLD, ALKA…KEQL, AAHD…KTVV, and LDVA…DEFK. Basic and acidic residues predominate over residues 3010–3019; the sequence is EAEDVTAKES. Positions 3010-3033 are disordered; it reads EAEDVTAKESAKKKKKDKKKSPQE. Repeat copies occupy residues 3241-4143, 4144-5097, 5098-6000, 6001-6903, 6904-7806, and 7807-8199. Positions 3241 to 8199 are 6 X tandem repeat; sequence QVAKDIKDSK…TLIPDLEERA (4959 aa). Positions 3913–3922 are enriched in basic and acidic residues; sequence EAEDVTAKES. The tract at residues 3913-3936 is disordered; that stretch reads EAEDVTAKESAKKKKKDKKKSPQE. The segment covering 4372–4393 has biased composition (basic and acidic residues); it reads ITREDGGDDNKSPDELIDDRGR. Residues 4372 to 4395 form a disordered region; that stretch reads ITREDGGDDNKSPDELIDDRGRST. Coiled-coil stretches lie at residues 4436–4506, 4541–4657, 4735–4793, 4856–4976, 5035–5152, 5203–5274, 5339–5409, 5444–5560, 5638–5696, 5759–5879, 5938–6055, 6106–6177, 6242–6312, 6347–6463, 6541–6599, 6662–6782, 6841–6958, 7009–7080, 7145–7215, 7250–7366, 7444–7502, 7565–7685, 7744–7861, 7912–7983, 8048–8118, 8153–8204, 8273–8329, and 8370–8390; these read DELI…EKSL, KAEE…ELLD, ALKA…KEQL, AAHD…KTVV, DDEK…DEFK, QLQH…PEND, KAEE…IWER, VAED…DINN, and STSI…KEIE. Basic and acidic residues predominate over residues 4867-4876; that stretch reads EAEDVTAKES. A disordered region spans residues 4867-4890; it reads EAEDVTAKESAKKKKKDKKKSPQE. The span at 5770 to 5779 shows a compositional bias: basic and acidic residues; sequence EAEDVTAKES. A disordered region spans residues 5770–5793; sequence EAEDVTAKESAKKKKKDKKKSPQE. The span at 6673 to 6682 shows a compositional bias: basic and acidic residues; it reads EAEDVTAKES. Residues 6673–6696 form a disordered region; it reads EAEDVTAKESAKKKKKDKKKSPQE. The span at 7576–7585 shows a compositional bias: basic and acidic residues; it reads EAEDVTAKES. The segment at 7576–7599 is disordered; it reads EAEDVTAKESAKKKKKDKKKSPQE. Disordered regions lie at residues 8391 to 8418 and 8449 to 8480; these read PRLQ…KPYD and SDSE…LSEE. Over residues 8401 to 8411 the composition is skewed to acidic residues; that stretch reads DNEDDEDEEKG. A compositionally biased stretch (basic and acidic residues) spans 8451–8464; that stretch reads SESRSEFDSLDSRS. The region spanning 8486 to 8545 is the KASH domain; it reads RSRWRRVLRTALPLQALLVLLMGAACLVPHCDDEYCCQLLNNFAKSFDPSLEFVNGPPPF. The chain crosses the membrane as a helical; Anchor for type IV membrane protein span at residues 8495–8513; sequence TALPLQALLVLLMGAACLV. Residues 8514 to 8545 lie on the Perinuclear space side of the membrane; that stretch reads PHCDDEYCCQLLNNFAKSFDPSLEFVNGPPPF.

It belongs to the nesprin family. In terms of assembly, interacts with F-actin via its N-terminal domain. Most likely interacts with unc-84; the interaction is probably required to recruit anc-1 to the nuclear envelope. As to expression, ubiquitously expressed in all postembryonic cells.

The protein resides in the nucleus outer membrane. It localises to the cytoplasm. The protein localises to the cytoskeleton. Its function is as follows. Plays a central role in nuclear and mitochondrial anchoring. Probably connects nuclei to the cytoskeleton by interacting with unc-84 at the nuclear envelope and with F-actin in the cytoplasm, creating a bridge across the nuclear envelope between the cytoskeleton and the nucleus. Has a role in positioning of the cell body of the PVQ lumbar interneuron. In Caenorhabditis elegans, this protein is Nuclear anchorage protein 1.